Here is a 329-residue protein sequence, read N- to C-terminus: DNA-directed RNA polymerase subunit alpha (329 aa).

Positions 1 to 234 (MQSAVNEFLT…QQLAVFVDLE (234 aa)) are alpha N-terminal domain (alpha-NTD). An alpha C-terminal domain (alpha-CTD) region spans residues 248–329 (IDPVLLRPVD…WPPASLKNND (82 aa)).

Belongs to the RNA polymerase alpha chain family. As to quaternary structure, homodimer. The RNAP catalytic core consists of 2 alpha, 1 beta, 1 beta' and 1 omega subunit. When a sigma factor is associated with the core the holoenzyme is formed, which can initiate transcription.

It catalyses the reaction RNA(n) + a ribonucleoside 5'-triphosphate = RNA(n+1) + diphosphate. Functionally, DNA-dependent RNA polymerase catalyzes the transcription of DNA into RNA using the four ribonucleoside triphosphates as substrates. The protein is DNA-directed RNA polymerase subunit alpha of Saccharophagus degradans (strain 2-40 / ATCC 43961 / DSM 17024).